We begin with the raw amino-acid sequence, 279 residues long: NADPH-dependent 7-cyano-7-deazaguanine reductase (279 aa).

86–88 (IES) is a substrate binding site. Position 88–89 (88–89 (SK)) interacts with NADPH. The active-site Thioimide intermediate is C187. D194 acts as the Proton donor in catalysis. Residue 226-227 (HE) participates in substrate binding. 255–256 (RG) provides a ligand contact to NADPH.

It belongs to the GTP cyclohydrolase I family. QueF type 2 subfamily. Homodimer.

The protein resides in the cytoplasm. It carries out the reaction 7-aminomethyl-7-carbaguanine + 2 NADP(+) = 7-cyano-7-deazaguanine + 2 NADPH + 3 H(+). Its pathway is tRNA modification; tRNA-queuosine biosynthesis. Catalyzes the NADPH-dependent reduction of 7-cyano-7-deazaguanine (preQ0) to 7-aminomethyl-7-deazaguanine (preQ1). In Haemophilus ducreyi (strain 35000HP / ATCC 700724), this protein is NADPH-dependent 7-cyano-7-deazaguanine reductase.